The sequence spans 2340 residues: MASASGGDVPAGREKDSKYRAFAKAVDQALKTFETPNEWADLISALGKLAKVFQSNAKYCAIPNRVTVAKRLSQCLHPALPMGVHLKALETYKIIFEILGPSKLPECLYLFAVGLFPLMDHCGIKVKSELFAIFENYLVPLGANLRPALPGFLGGVLLALEEGTEFYERSFILLDRVCEKVGPRAFYACLWQAILGSPPVRLPAMIYVNAKFDKLKSLDDQIHLVGDHVNHMVAALCAVADDTGSPLVQRYLLDFLCAAFPLDSTNLTDEDFVQLLRRCLFVVLRRDMSLNRRLYTWLINRSGETRGVSGLGGPDDGLELSFFKEKVLGLVHGALEQYLALDIIETPFANPQQSIWGDRKEAEQVQFAEVRVCRLLLYLQDRADIGRTILETVFSDFLKKSAEFHQGSNIKLIKKRPDSKPPRKPGDREGLHLDLNSLHSGVSGNSEDVTAPEGEPSIQSRRVDELSKTFNMLLNSLEPGFLWNFLGTWYQRIVEEGSEGKKSIHDFSQVVSICLEMSNVESDPAIRTQHLPRLLETILEGLSNKSLISECDQQDLLKLYTVCQKLLEISTAHPQSPIEVDEIAEDSLSLSQEVTAIEHERSQTDACLTQCVSALSTIFEIYTTRRDPSLIPLIDASTALLNAFLEVPIYYLGFDVVDNPEDVPSEVQQWLKNMLKVIDGPGWLKEMRNGHCSDVSARASLLELLCKIYVKSVSVLQQHEEAAHRPQDDFYDEMTHVLLKPLLGRRDIQFIEQGKVFGTCGEAVWLGIASRKFCCEQQRLARLLVELHSRRPQEASSDVESIVVQALTSTDDLVCTKAARTFHRVWVLTRNLEEAGGIYRKPFNRAVMILLGVLADESVSKTRTELKAAASAWFQDCSKHQDLPKIVQMLSTMLMNPVTARISIQYIRQDSKLTNEDCSAIPSDVAAVTLMTIDGKQRLYHVTGSGADSDASYLTEVRNRLLRASAGEETSEALQAHIIPSTEVLPAFDDDTDSLDTLSMGNESPEDVVKDILAILVDEVCQEYEERERLHDLLNLSNLEASGARFNLNEHEEQEESPEDRPAPIAAVQRVKKGHRRQDSLQESIFNMTEKDLCAFDTSEIFRPSTESLRGTATTSSTRETILPTGTVVGTVSSASSTGGSTSGSSLFEEMHTHMLLYGESGKVVDLARAETAFRILTALLAPRGATGNRMLLNCLVSSGTTTSSGTSSEGGSAEQSLVELMQRHVRAILGQHFWSAPASDEEKHKHFTLLELLITISLHFLRSYFLNSPISPVTEADLASLWKCKISALEFLCELFRELSAMLNEHESKQFVQFVQTILNRSKLQKCLLHLLLTAVDHNPMENGKLGGPLSVSISKFNEGLVGESRRLLPLLAAYHRSLLTFTSHAIRLECDIKRGFSTFSDAQSTHRYSIIQSVINQSFNNRTSSRDGHASTVELRAFLLILLNALKKQPHRHEMWLQFVVQILPWVERSLATIVCRVVEQLCKNMENAMSVAYENPPTSDVVVDSPGETRDEPDSYPANYLAMTLESLTTLVHFCVIDSAPTTTTTSGGVMTSSGAAQINDGTTPSSTSMVGHAMSVIPGSKVATELFSQLGKVFSMSGDSGGVLSSKMESSRQHGNGWRQAQSDMLTSLPHSLATVCNVWTVVRRAQNPLVPIGTNNQLRRLVLHLLSPIAQHHKHAFLTSLALVWLTRSTAKPTVTLRKQDPDRATFEYSSAQLDITNLLLSLQVIPFEDLISSVNSTLREASFKANKVGITTIDKTNFPTEEPLLELVHSCVSAVLQTQLRLCWSSLLSLFSEAPLSALSARAVFLLFVILSDFVKCVGGAYIVEDKAMYRNVQEVCSRLAEAVNAIVGWQLETTTWLKRTLVVKQDHGTSSINSNSIRSVEQSPIIEMQSSISNLSSEASQSTRNSTLSLINKPGGSITSGSTSTTTEKAEKKSSSNLRASIKDTNNNRRDPAHSTQALFLLAERLTDLLDSVSKSDEKDKVLPTLQAVWANVVPYLKAKNARNARFFLASSQLLASMSSYSYMRPVWKKTTLDLLLDSGFFKMDHAALKQWLVVTDHLMTHDRTSFKDLLKSISYSPNASFSIMTSKEQEYEARAQALKRLTFVVFGSQLDQYNGQMNDIQERLSDNLRVSQSPVIRSSFFLCVRVLLLRLRPHSLIGVWPIMVTELVHALSQLEQQLQNNGEQEGSSTSDQWMQLYVAACKLLETLCTLPAGYLSHFQMFHWAFVSSVSADKTEIFKPFAERINDLLAKKYGEFDAMSNHTASLAAVKILTSFEELRPFFYTLANLNKSVPESNNTPLRDAHALSGSLTYKNAVARLESALYVDFSEHLQF.

Disordered stretches follow at residues 411–458 (KLIK…EPSI) and 1910–1959 (TRNS…RRDP). The span at 415 to 432 (KRPDSKPPRKPGDREGLH) shows a compositional bias: basic and acidic residues. Residues 437–448 (SLHSGVSGNSED) are compositionally biased toward polar residues. Low complexity predominate over residues 1922–1934 (GGSITSGSTSTTT).

It belongs to the DOP1 family.

Essential for cell patterning during gastrulation. May be involved in protein traffic between late Golgi and early endosomes. This Caenorhabditis briggsae protein is Protein pad-1 (pad-1).